Here is a 292-residue protein sequence, read N- to C-terminus: Peroxisomal 2,4-dienoyl-CoA reductase SPS19 [(3E)-enoyl-CoA-producing] (292 aa).

Ile-36, Asp-85, and Lys-145 together coordinate NADP(+). The Proton donor role is filled by Ser-162. Lys-180 contributes to the NADP(+) binding site. The active-site Lowers pKa of active site Tyr is the Lys-180. Lys-188 participates in a covalent cross-link: Glycyl lysine isopeptide (Lys-Gly) (interchain with G-Cter in ubiquitin). Ile-209 contacts NADP(+). A Microbody targeting signal motif is present at residues 290 to 292; sequence SKL.

This sequence belongs to the short-chain dehydrogenases/reductases (SDR) family. Homodimer.

The protein resides in the peroxisome. It catalyses the reaction a (2E,4Z)-dienoyl-CoA + NADPH + H(+) = a 4,5-saturated-(3E)-enoyl-CoA + NADP(+). The enzyme catalyses a (2E,4E)-dienoyl-CoA + NADPH + H(+) = a 4,5-saturated-(3E)-enoyl-CoA + NADP(+). In terms of biological role, auxiliary enzyme of beta-oxidation. Participates in the degradation of unsaturated fatty enoyl-CoA esters having double bonds in both even- and odd-numbered positions in peroxisome. Catalyzes the NADP-dependent reduction of 2,4-dienoyl-CoA to yield trans-3-enoyl-CoA. Dispensable for growth and sporulation on solid acetate and oleate media, but is essential for these processes to occur on petroselineate. The sequence is that of Peroxisomal 2,4-dienoyl-CoA reductase SPS19 [(3E)-enoyl-CoA-producing] (SPS19) from Saccharomyces cerevisiae (strain ATCC 204508 / S288c) (Baker's yeast).